Reading from the N-terminus, the 281-residue chain is Pantothenate synthetase (281 aa).

30-37 (MGYLHEGH) is a binding site for ATP. Histidine 37 functions as the Proton donor in the catalytic mechanism. Residue glutamine 61 coordinates (R)-pantoate. Residue glutamine 61 participates in beta-alanine binding. 147 to 150 (GQKD) serves as a coordination point for ATP. Glutamine 153 contributes to the (R)-pantoate binding site. ATP contacts are provided by residues valine 176 and 184–187 (MSSR).

Belongs to the pantothenate synthetase family. As to quaternary structure, homodimer.

It is found in the cytoplasm. It catalyses the reaction (R)-pantoate + beta-alanine + ATP = (R)-pantothenate + AMP + diphosphate + H(+). It participates in cofactor biosynthesis; (R)-pantothenate biosynthesis; (R)-pantothenate from (R)-pantoate and beta-alanine: step 1/1. Functionally, catalyzes the condensation of pantoate with beta-alanine in an ATP-dependent reaction via a pantoyl-adenylate intermediate. This Heliobacterium modesticaldum (strain ATCC 51547 / Ice1) protein is Pantothenate synthetase.